A 432-amino-acid chain; its full sequence is Enolase (432 aa).

Gln-167 serves as a coordination point for (2R)-2-phosphoglycerate. The Proton donor role is filled by Glu-209. Residues Asp-246, Glu-290, and Asp-317 each coordinate Mg(2+). (2R)-2-phosphoglycerate-binding residues include Lys-342, Arg-371, Ser-372, and Lys-393. The active-site Proton acceptor is the Lys-342.

This sequence belongs to the enolase family. Component of the RNA degradosome, a multiprotein complex involved in RNA processing and mRNA degradation. The cofactor is Mg(2+).

The protein resides in the cytoplasm. It is found in the secreted. Its subcellular location is the cell surface. The enzyme catalyses (2R)-2-phosphoglycerate = phosphoenolpyruvate + H2O. The protein operates within carbohydrate degradation; glycolysis; pyruvate from D-glyceraldehyde 3-phosphate: step 4/5. In terms of biological role, catalyzes the reversible conversion of 2-phosphoglycerate (2-PG) into phosphoenolpyruvate (PEP). It is essential for the degradation of carbohydrates via glycolysis. This chain is Enolase, found in Klebsiella pneumoniae (strain 342).